A 424-amino-acid polypeptide reads, in one-letter code: MPVNLPEIVPASLTPIQGIRLGWAESNIKTQNRKDLLVIEICDGSAVSGVFTQNRFCAAPVTLCKKHLDAVKNNATTGGNVSGIKALVVNTGNANAGTGEQGMLDALTTCQHLAEIMAIPVESILPFSTGVILEHLPMDKLLAGLPLAVTNLTTDNWADAASAIMTTDIAPKAYATQVKVGGESINITGISKGAGMIHPNMATMLGYVATDANITQSLLDSMTKEIADLSFNCISVDGDTSTNDSFIVIATGKSNAVAITSPNDKGYQEVFDALLETSQYLAKAIVRDGEGATKFITVTVKGALSIDEAKTIGFSIGKSPLVKTAMFASDPNLGRVLAAIGYASRECDSLADLDTNQLELYFGGLLVAEKGGRAASYKEDEGQAIMNEAEIDITVQLHRGNEESTIWTCDFSYDYVKINAEYRT.

The substrate site is built by threonine 166, lysine 192, threonine 203, glutamate 290, asparagine 419, and threonine 424. Threonine 203 functions as the Nucleophile in the catalytic mechanism.

Belongs to the ArgJ family. Heterotetramer of two alpha and two beta chains.

The protein resides in the cytoplasm. It carries out the reaction N(2)-acetyl-L-ornithine + L-glutamate = N-acetyl-L-glutamate + L-ornithine. It catalyses the reaction L-glutamate + acetyl-CoA = N-acetyl-L-glutamate + CoA + H(+). Its pathway is amino-acid biosynthesis; L-arginine biosynthesis; L-ornithine and N-acetyl-L-glutamate from L-glutamate and N(2)-acetyl-L-ornithine (cyclic): step 1/1. It functions in the pathway amino-acid biosynthesis; L-arginine biosynthesis; N(2)-acetyl-L-ornithine from L-glutamate: step 1/4. Catalyzes two activities which are involved in the cyclic version of arginine biosynthesis: the synthesis of N-acetylglutamate from glutamate and acetyl-CoA as the acetyl donor, and of ornithine by transacetylation between N(2)-acetylornithine and glutamate. The protein is Arginine biosynthesis bifunctional protein ArgJ of Colwellia psychrerythraea (strain 34H / ATCC BAA-681) (Vibrio psychroerythus).